The chain runs to 396 residues: Elongation factor Tu 1 (396 aa).

Residues 10–206 form the tr-type G domain; that stretch reads KPHCNIGTIG…AVDAYIPQPE (197 aa). The interval 19-26 is G1; it reads GHVDHGKT. 19-26 is a binding site for GTP; sequence GHVDHGKT. Thr-26 is a Mg(2+) binding site. A G2 region spans residues 60–64; that stretch reads GITIS. The segment at 81-84 is G3; sequence DCPG. GTP is bound by residues 81-85 and 136-139; these read DCPGH and NKCD. The G4 stretch occupies residues 136–139; it reads NKCD. The interval 174–176 is G5; it reads SAL.

This sequence belongs to the TRAFAC class translation factor GTPase superfamily. Classic translation factor GTPase family. EF-Tu/EF-1A subfamily. In terms of assembly, monomer.

The protein resides in the cytoplasm. It catalyses the reaction GTP + H2O = GDP + phosphate + H(+). GTP hydrolase that promotes the GTP-dependent binding of aminoacyl-tRNA to the A-site of ribosomes during protein biosynthesis. The chain is Elongation factor Tu 1 from Rhodopseudomonas palustris (strain BisB5).